Reading from the N-terminus, the 98-residue chain is NADH-ubiquinone oxidoreductase chain 4L (98 aa).

The next 3 helical transmembrane spans lie at 1-21 (MALI…GLLL), 29-49 (SLLC…VMIL), and 61-81 (IVLL…LVMV).

It belongs to the complex I subunit 4L family. As to quaternary structure, core subunit of respiratory chain NADH dehydrogenase (Complex I) which is composed of 45 different subunits.

It localises to the mitochondrion inner membrane. The catalysed reaction is a ubiquinone + NADH + 5 H(+)(in) = a ubiquinol + NAD(+) + 4 H(+)(out). Functionally, core subunit of the mitochondrial membrane respiratory chain NADH dehydrogenase (Complex I) which catalyzes electron transfer from NADH through the respiratory chain, using ubiquinone as an electron acceptor. Part of the enzyme membrane arm which is embedded in the lipid bilayer and involved in proton translocation. In Rhinolophus monoceros (Formosan lesser horseshoe bat), this protein is NADH-ubiquinone oxidoreductase chain 4L (MT-ND4L).